The following is a 108-amino-acid chain: U3-lycotoxin-Ls1w (108 aa).

The first 20 residues, 1 to 20 (MKFVLLFGVLLVTLFSYSSA), serve as a signal peptide directing secretion. The propeptide occupies 21 to 44 (EMLDDFDQADEDELLSLIEKEEAR). Cystine bridges form between C48–C63, C55–C72, C62–C87, and C74–C85.

Belongs to the neurotoxin 19 (CSTX) family. 01 subfamily. Expressed by the venom gland.

Its subcellular location is the secreted. In Lycosa singoriensis (Wolf spider), this protein is U3-lycotoxin-Ls1w.